Consider the following 571-residue polypeptide: Glutamate--tRNA ligase (571 aa).

Residues 106 to 116 carry the 'HIGH' region motif; it reads PNPDGAFHLGN.

It belongs to the class-I aminoacyl-tRNA synthetase family. Glutamate--tRNA ligase type 2 subfamily.

It is found in the cytoplasm. It catalyses the reaction tRNA(Glu) + L-glutamate + ATP = L-glutamyl-tRNA(Glu) + AMP + diphosphate. Functionally, catalyzes the attachment of glutamate to tRNA(Glu) in a two-step reaction: glutamate is first activated by ATP to form Glu-AMP and then transferred to the acceptor end of tRNA(Glu). This Pyrococcus abyssi (strain GE5 / Orsay) protein is Glutamate--tRNA ligase.